A 378-amino-acid chain; its full sequence is Probable pectin lyase A (378 aa).

The signal sequence occupies residues 1–18; that stretch reads MKYQDLLAIAGCIANAGA. 2 cysteine pairs are disulfide-bonded: Cys81-Cys100 and Cys90-Cys224. The N-linked (GlcNAc...) asparagine glycan is linked to Asn127. Arg254 is a catalytic residue. Residues Cys321 and Cys329 are joined by a disulfide bond.

It belongs to the polysaccharide lyase 1 family.

Its subcellular location is the secreted. It carries out the reaction Eliminative cleavage of (1-&gt;4)-alpha-D-galacturonan methyl ester to give oligosaccharides with 4-deoxy-6-O-methyl-alpha-D-galact-4-enuronosyl groups at their non-reducing ends.. Pectinolytic enzymes consist of four classes of enzymes: pectin lyase, polygalacturonase, pectin methylesterase and rhamnogalacturonase. Among pectinolytic enzymes, pectin lyase is the most important in depolymerization of pectin, since it cleaves internal glycosidic bonds of highly methylated pectins. This chain is Probable pectin lyase A (pelA), found in Aspergillus fumigatus (strain CBS 144.89 / FGSC A1163 / CEA10) (Neosartorya fumigata).